Reading from the N-terminus, the 159-residue chain is Putative 2'-deoxynucleoside 5'-phosphate N-hydrolase 1 (159 aa).

Substrate-binding positions include 25–31 (FLSGSIR), tyrosine 40, histidine 58, glutamate 104, and 126–128 (SAM).

It belongs to the 2'-deoxynucleoside 5'-phosphate N-hydrolase 1 family. In terms of assembly, monomer and homodimer.

The catalysed reaction is a pyrimidine 2'-deoxyribonucleoside 5'-phosphate + H2O = a pyrimidine nucleobase + 2-deoxy-D-ribose 5-phosphate. It carries out the reaction a purine 2'-deoxyribonucleoside 5'-phosphate + H2O = a purine nucleobase + 2-deoxy-D-ribose 5-phosphate. Catalyzes the cleavage of the N-glycosidic bond of deoxyribonucleoside 5'-monophosphates to yield deoxyribose 5-phosphate and a purine or pyrimidine base. The protein is Putative 2'-deoxynucleoside 5'-phosphate N-hydrolase 1 of Methanosarcina barkeri (strain Fusaro / DSM 804).